The chain runs to 269 residues: Chymotrypsin-like elastase family member 2A (269 aa).

The N-terminal stretch at M1–S16 is a signal peptide. Positions C17–R28 are cleaved as a propeptide — activation peptide. Positions V29 to A267 constitute a Peptidase S1 domain. An intrachain disulfide couples C58 to C74. Active-site charge relay system residues include H73 and D121. Disulfide bonds link C155-C222, C186-C202, and C212-C243. S216 serves as the catalytic Charge relay system.

The protein belongs to the peptidase S1 family. Elastase subfamily. As to quaternary structure, interacts with CPA1. Interacts with SERPINA1. Pancreas.

It localises to the secreted. It catalyses the reaction Preferential cleavage: Leu-|-Xaa, Met-|-Xaa and Phe-|-Xaa. Hydrolyzes elastin.. In terms of biological role, elastase that enhances insulin signaling and might have a physiologic role in cellular glucose metabolism. Circulates in plasma and reduces platelet hyperactivation, triggers both insulin secretion and degradation, and increases insulin sensitivity. In Sus scrofa (Pig), this protein is Chymotrypsin-like elastase family member 2A (CELA2A).